The chain runs to 160 residues: UPF0178 protein PA5247 (160 aa).

The protein belongs to the UPF0178 family.

The chain is UPF0178 protein PA5247 from Pseudomonas aeruginosa (strain ATCC 15692 / DSM 22644 / CIP 104116 / JCM 14847 / LMG 12228 / 1C / PRS 101 / PAO1).